Here is a 1324-residue protein sequence, read N- to C-terminus: Sal-like protein 1 (1324 aa).

The tract at residues 1–42 is disordered; the sequence is MSRRKQAKPQHFQSDPEVASLPRRDGDTEKGQPSRPTKSKDA. Over residues 22 to 42 the composition is skewed to basic and acidic residues; the sequence is PRRDGDTEKGQPSRPTKSKDA. A C2H2-type 1; atypical zinc finger spans residues 43–65; that stretch reads HVCGRCCAEFFELSDLLLHKKNC. Disordered regions lie at residues 77–102, 108–127, 132–172, and 317–336; these read NPAS…NDTV, VDCS…SMEV, ANKS…TSAI, and PPIQ…SNSG. Basic and acidic residues predominate over residues 113 to 124; it reads LSEHNGLDREES. Residues 135–158 show a composition bias toward low complexity; the sequence is SGSGTSSGSHSSTAPSSSSSSSSS. The segment covering 321-336 has biased composition (polar residues); that stretch reads LPQSSSGNTIIPSNSG. Lys-439 participates in a covalent cross-link: Glycyl lysine isopeptide (Lys-Gly) (interchain with G-Cter in SUMO2). 2 consecutive C2H2-type zinc fingers follow at residues 449 to 471 and 477 to 499; these read HKCR…LRSH and FKCN…FQRH. The disordered stretch occupies residues 577 to 646; sequence PIPISHSATS…ASSSVLSSPA (70 aa). Phosphoserine is present on residues Ser-590, Ser-593, and Ser-595. Residues 633-646 show a composition bias toward low complexity; it reads SVPTASSSVLSSPA. Residues Lys-673, Lys-690, and Lys-701 each participate in a glycyl lysine isopeptide (Lys-Gly) (interchain with G-Cter in SUMO2) cross-link. 3 C2H2-type zinc fingers span residues 706–728, 734–756, and 766–788; these read NECI…YRTH, FKCK…YSVH, and HSCP…IRMH. 2 disordered regions span residues 790–856 and 894–963; these read GGQI…SSPL and EGDV…LSPT. Positions 802–811 are enriched in polar residues; that stretch reads YSESMESDTG. Acidic residues predominate over residues 820–833; sequence DLDNFSDENMEDCP. Residues 843–856 are compositionally biased toward low complexity; the sequence is SADASQDSLSSSPL. Over residues 899 to 936 the composition is skewed to polar residues; that stretch reads TNDSSSVGGDMESQSAGSPAISESTSSMQALSPSNSTQ. Over residues 937-949 the composition is skewed to basic and acidic residues; the sequence is EFHKSPSIEEKPQ. A phosphoserine mark is found at Ser-941 and Ser-943. Glycyl lysine isopeptide (Lys-Gly) (interchain with G-Cter in SUMO2) cross-links involve residues Lys-947 and Lys-982. C2H2-type zinc fingers lie at residues 1001–1023 and 1029–1051; these read TACD…YRSH and FICT…MLTH. Residue Lys-1086 forms a Glycyl lysine isopeptide (Lys-Gly) (interchain with G-Cter in SUMO2) linkage. Residues 1095–1120 form a disordered region; the sequence is VSPQDSKDTPTSHVPSGPLSSSATSP. Polar residues predominate over residues 1105–1119; it reads TSHVPSGPLSSSATS. 2 consecutive C2H2-type zinc fingers follow at residues 1134–1156 and 1162–1184; these read HYCN…ERTH and FACT…MGTH. Glycyl lysine isopeptide (Lys-Gly) (interchain with G-Cter in SUMO2) cross-links involve residues Lys-1219, Lys-1299, and Lys-1319.

It belongs to the sal C2H2-type zinc-finger protein family. As to quaternary structure, may associate with NuRD histone deacetylase complex (HDAC). Interacts with components of HDAC complex including HDAC1, HDAC2, RBBP4, RBPP7, MTA1 and MTA2. Interacts with CCNQ. Interacts with NSD2 (via PHD-type zinc fingers 1, 2 and 3). In terms of tissue distribution, highest levels in kidney. Lower levels in adult brain (enriched in corpus callosum, lower expression in substantia nigra) and liver.

It is found in the nucleus. Its function is as follows. Transcriptional repressor involved in organogenesis. Plays an essential role in ureteric bud invasion during kidney development. The sequence is that of Sal-like protein 1 (SALL1) from Homo sapiens (Human).